A 109-amino-acid chain; its full sequence is Envelope small membrane protein (109 aa).

At 1–11 the chain is on the virion surface side; the sequence is MTNLLNKSLEE. A helical membrane pass occupies residues 12–32; it reads NGSFLTAVYIFVGFVALYLLG. Over 33 to 109 the chain is Intravirion; it reads RALQAFVQAA…QDVQRNKLYS (77 aa). The interval 89–109 is disordered; the sequence is NGWNNKNPANFQDVQRNKLYS. Residues 90–109 are compositionally biased toward polar residues; sequence GWNNKNPANFQDVQRNKLYS.

The protein belongs to the gammacoronaviruses E protein family. As to quaternary structure, homooligomer. Interacts with the M membrane protein in the budding compartment of the host cell, which is located between endoplasmic reticulum and the Golgi complex. The cytoplasmic tails of both proteins are important for this function. Interacts with Nucleoprotein.

It is found in the host Golgi apparatus membrane. Functionally, plays a central role in virus morphogenesis and assembly. Acts as a viroporin and self-assembles in host membranes forming pentameric protein-lipid pores that allow ion transport. Also plays a role in the induction of apoptosis. The sequence is that of Envelope small membrane protein from Avian infectious bronchitis virus (strain KB8523) (IBV).